A 387-amino-acid chain; its full sequence is Pepsin A (387 aa).

The signal sequence occupies residues 1–15 (MKWLLLLSLVALSEC). The propeptide at 16 to 61 (LYKVSLIKKKSLRKNLIEHGLLKDFLKNNTLDPASKYFPQGEAATM) is activation peptide. Residues 75 to 384 (YFGTIGIGTP…DRANNQVGLA (310 aa)) form the Peptidase A1 domain. Residue D93 is part of the active site. C106 and C111 form a disulfide bridge. S129 carries the phosphoserine modification. A disulfide bridge links C267 with C271. The active site involves D276. C310 and C343 are disulfide-bonded.

This sequence belongs to the peptidase A1 family.

It is found in the secreted. The enzyme catalyses Preferential cleavage: hydrophobic, preferably aromatic, residues in P1 and P1' positions. Cleaves 1-Phe-|-Val-2, 4-Gln-|-His-5, 13-Glu-|-Ala-14, 14-Ala-|-Leu-15, 15-Leu-|-Tyr-16, 16-Tyr-|-Leu-17, 23-Gly-|-Phe-24, 24-Phe-|-Phe-25 and 25-Phe-|-Tyr-26 bonds in the B chain of insulin.. Its activity is regulated as follows. Inhibited by pepstatin. Its function is as follows. Shows particularly broad specificity; although bonds involving phenylalanine and leucine are preferred, many others are also cleaved to some extent. This is Pepsin A (PGA) from Callithrix jacchus (White-tufted-ear marmoset).